Reading from the N-terminus, the 485-residue chain is Glutamyl-tRNA(Gln) amidotransferase subunit A (485 aa).

Residues Lys79 and Ser154 each act as charge relay system in the active site. Ser178 (acyl-ester intermediate) is an active-site residue.

It belongs to the amidase family. GatA subfamily. As to quaternary structure, heterotrimer of A, B and C subunits.

It carries out the reaction L-glutamyl-tRNA(Gln) + L-glutamine + ATP + H2O = L-glutaminyl-tRNA(Gln) + L-glutamate + ADP + phosphate + H(+). Its function is as follows. Allows the formation of correctly charged Gln-tRNA(Gln) through the transamidation of misacylated Glu-tRNA(Gln) in organisms which lack glutaminyl-tRNA synthetase. The reaction takes place in the presence of glutamine and ATP through an activated gamma-phospho-Glu-tRNA(Gln). In Clostridium novyi (strain NT), this protein is Glutamyl-tRNA(Gln) amidotransferase subunit A.